A 705-amino-acid chain; its full sequence is 1,4-alpha-glucan branching enzyme GlgB (705 aa).

The active-site Nucleophile is Asp393. Catalysis depends on Glu446, which acts as the Proton donor.

It belongs to the glycosyl hydrolase 13 family. GlgB subfamily. As to quaternary structure, monomer.

The enzyme catalyses Transfers a segment of a (1-&gt;4)-alpha-D-glucan chain to a primary hydroxy group in a similar glucan chain.. It participates in glycan biosynthesis; glycogen biosynthesis. Functionally, catalyzes the formation of the alpha-1,6-glucosidic linkages in glycogen by scission of a 1,4-alpha-linked oligosaccharide from growing alpha-1,4-glucan chains and the subsequent attachment of the oligosaccharide to the alpha-1,6 position. The chain is 1,4-alpha-glucan branching enzyme GlgB from Picrophilus torridus (strain ATCC 700027 / DSM 9790 / JCM 10055 / NBRC 100828 / KAW 2/3).